Reading from the N-terminus, the 227-residue chain is uncharacterized protein (227 aa).

A signal peptide spans 1–21 (MELKKIAVGLTALLGMSVANA).

This is an uncharacterized protein from Haemophilus influenzae (strain ATCC 51907 / DSM 11121 / KW20 / Rd).